The primary structure comprises 270 residues: Protein-ADP-ribose hydrolase (270 aa).

In terms of domain architecture, Macro spans 73 to 267; it reads VSVKDCQKTN…LYDTYLQKEN (195 aa). ADP-D-ribose-binding residues include Asp92, Ile93, and Asn106. Zn(2+) is bound by residues Cys112, His117, and Cys119. Positions 119, 120, 121, 212, 213, 214, 215, and 216 each coordinate ADP-D-ribose.

It belongs to the MacroD-type family. Zn-Macro subfamily. Zn(2+) is required as a cofactor.

The catalysed reaction is 4-O-(ADP-D-ribosyl)-L-aspartyl-[protein] + H2O = L-aspartyl-[protein] + ADP-D-ribose + H(+). ADP-ribosylhydrolase that specifically reverses the SirTM-mediated mono-ADP-ribosylation at an asparatate residue of GcvH-L, by releasing ADP-ribose from the target protein. May play a role in the regulation of the response to host-induced oxidative stress. This Streptococcus pyogenes serotype M1 protein is Protein-ADP-ribose hydrolase.